The chain runs to 251 residues: MQPNEQPGTGPADTTLEQQDTAAAEVGHPRRIRSFVRRAGRTSTGQQRAIDELGPRFLLPYAAAPLDWEAAFGRTGARRIFEIGFGMGETSAHIAQLRPDDDFLGVEVHEPGVGALLKLIGERGIGNVRIVSHDAVEVLAQMIPEGTLDGIHVFFPDPWHKKRHNKRRLIQGPFVARLAAHLRPGGYLHCATDWEEYAHQMLEVLSAEPLLENTADGFAPRPDYRPVTKFEKRGLRLGHGVWDVVFRKRAA.

The tract at residues 1–43 (MQPNEQPGTGPADTTLEQQDTAAAEVGHPRRIRSFVRRAGRTS) is disordered. A compositionally biased stretch (basic residues) spans 29 to 40 (PRRIRSFVRRAG). Glutamate 82, glutamate 107, aspartate 134, and aspartate 157 together coordinate S-adenosyl-L-methionine. Aspartate 157 is a catalytic residue. Lysine 161 is a substrate binding site. The interaction with RNA stretch occupies residues 163-168 (RHNKRR). Residues aspartate 193 and 228–231 (TKFE) each bind substrate.

Belongs to the class I-like SAM-binding methyltransferase superfamily. TrmB family.

It catalyses the reaction guanosine(46) in tRNA + S-adenosyl-L-methionine = N(7)-methylguanosine(46) in tRNA + S-adenosyl-L-homocysteine. It participates in tRNA modification; N(7)-methylguanine-tRNA biosynthesis. Catalyzes the formation of N(7)-methylguanine at position 46 (m7G46) in tRNA. In Ralstonia nicotianae (strain ATCC BAA-1114 / GMI1000) (Ralstonia solanacearum), this protein is tRNA (guanine-N(7)-)-methyltransferase.